The sequence spans 376 residues: Glutamate 5-kinase (376 aa).

Lys-15 is an ATP binding site. 3 residues coordinate substrate: Ser-55, Asp-141, and Asn-153. ATP contacts are provided by residues 173–174 (SD) and 215–221 (TGGMQTK). One can recognise a PUA domain in the interval 280-361 (AGRLTVDAGA…HAIAEVLDEA (82 aa)).

It belongs to the glutamate 5-kinase family.

It localises to the cytoplasm. The catalysed reaction is L-glutamate + ATP = L-glutamyl 5-phosphate + ADP. It functions in the pathway amino-acid biosynthesis; L-proline biosynthesis; L-glutamate 5-semialdehyde from L-glutamate: step 1/2. Functionally, catalyzes the transfer of a phosphate group to glutamate to form L-glutamate 5-phosphate. The chain is Glutamate 5-kinase from Salinibacter ruber (strain DSM 13855 / M31).